The sequence spans 594 residues: UvrABC system protein C (594 aa).

The 87-residue stretch at 13–99 (SSSGVYQYFD…IKQLKPKYNI (87 aa)) folds into the GIY-YIG domain. One can recognise a UVR domain in the interval 205-240 (DRLIKELELKMERLSSNLRFEEALIYRDRIAKIQKI).

It belongs to the UvrC family. Interacts with UvrB in an incision complex.

Its subcellular location is the cytoplasm. In terms of biological role, the UvrABC repair system catalyzes the recognition and processing of DNA lesions. UvrC both incises the 5' and 3' sides of the lesion. The N-terminal half is responsible for the 3' incision and the C-terminal half is responsible for the 5' incision. The polypeptide is UvrABC system protein C (Helicobacter pylori (strain J99 / ATCC 700824) (Campylobacter pylori J99)).